A 367-amino-acid chain; its full sequence is tRNA-specific 2-thiouridylase MnmA (367 aa).

Residues glycine 13–serine 20 and methionine 39 each bind ATP. Positions asparagine 99–aspartate 101 are interaction with target base in tRNA. Catalysis depends on cysteine 104, which acts as the Nucleophile. Residues cysteine 104 and cysteine 200 are joined by a disulfide bond. Glycine 128 is a binding site for ATP. The segment at lysine 150 to glutamine 152 is interaction with tRNA. Catalysis depends on cysteine 200, which acts as the Cysteine persulfide intermediate. Residues arginine 307 to tyrosine 308 form an interaction with tRNA region.

The protein belongs to the MnmA/TRMU family.

The protein resides in the cytoplasm. It catalyses the reaction S-sulfanyl-L-cysteinyl-[protein] + uridine(34) in tRNA + AH2 + ATP = 2-thiouridine(34) in tRNA + L-cysteinyl-[protein] + A + AMP + diphosphate + H(+). Its function is as follows. Catalyzes the 2-thiolation of uridine at the wobble position (U34) of tRNA, leading to the formation of s(2)U34. The sequence is that of tRNA-specific 2-thiouridylase MnmA from Neisseria meningitidis serogroup C / serotype 2a (strain ATCC 700532 / DSM 15464 / FAM18).